Consider the following 176-residue polypeptide: Ribosome maturation factor RimM (176 aa).

One can recognise a PRC barrel domain in the interval 100-173 (KDEYHYHDLI…WLLINPPPGL (74 aa)).

This sequence belongs to the RimM family. Binds ribosomal protein uS19.

The protein resides in the cytoplasm. Functionally, an accessory protein needed during the final step in the assembly of 30S ribosomal subunit, possibly for assembly of the head region. Essential for efficient processing of 16S rRNA. May be needed both before and after RbfA during the maturation of 16S rRNA. It has affinity for free ribosomal 30S subunits but not for 70S ribosomes. The sequence is that of Ribosome maturation factor RimM from Prochlorococcus marinus (strain NATL1A).